The primary structure comprises 560 residues: Cytosolic purine 5'-nucleotidase (560 aa).

Residue D52 is the Nucleophile of the active site. IMP contacts are provided by D52 and D54. D52 and D54 together coordinate Mg(2+). D54 serves as the catalytic Proton donor. 2 residues coordinate ATP: R144 and N154. IMP contacts are provided by R202, D206, K215, T249, N250, S251, and K292. Residue D351 coordinates Mg(2+). At S418 the chain carries Phosphoserine. Residues Q453 and R456 each contribute to the ATP site. S502, S511, and S527 each carry phosphoserine. The disordered stretch occupies residues 541 to 560 (PQEITHCHDEDDDEEEEEEE). The interval 548-560 (HDEDDDEEEEEEE) is required for tetramer assembly. Residues 550–560 (EDDDEEEEEEE) show a composition bias toward acidic residues.

It belongs to the 5'(3')-deoxyribonucleotidase family. Homotetramer. Mg(2+) is required as a cofactor.

It localises to the cytoplasm. It is found in the cytosol. The enzyme catalyses a ribonucleoside 5'-phosphate + H2O = a ribonucleoside + phosphate. It carries out the reaction a 2'-deoxyribonucleoside + a ribonucleoside 5'-phosphate = a ribonucleoside + a 2'-deoxyribonucleoside 5'-phosphate. The catalysed reaction is IMP + H2O = inosine + phosphate. It catalyses the reaction GMP + H2O = guanosine + phosphate. The enzyme catalyses dIMP + H2O = 2'-deoxyinosine + phosphate. It carries out the reaction dGMP + H2O = 2'-deoxyguanosine + phosphate. The catalysed reaction is XMP + H2O = xanthosine + phosphate. It catalyses the reaction inosine + GMP = guanosine + IMP. The enzyme catalyses dGMP + inosine = 2'-deoxyguanosine + IMP. It carries out the reaction dIMP + inosine = 2'-deoxyinosine + IMP. The catalysed reaction is inosine + UMP = uridine + IMP. It catalyses the reaction inosine + CMP = cytidine + IMP. The enzyme catalyses inosine + AMP = IMP + adenosine. With respect to regulation, allosterically activated by various compounds including ATP, 2,3-BPG/2,3-Bisphosphoglyceric acid and Ap4A/P1,P4-bis(5'-adenosyl) tetraphosphate. Binding of an allosteric activator is a prerequisiste to magnesium and substrate binding. Inhibited by inorganic phosphate. Functionally, broad specificity cytosolic 5'-nucleotidase that catalyzes the dephosphorylation of 6-hydroxypurine nucleoside 5'-monophosphates. In addition, possesses a phosphotransferase activity by which it can transfer a phosphate from a donor nucleoside monophosphate to an acceptor nucleoside, preferably inosine, deoxyinosine and guanosine. Has the highest activities for IMP and GMP followed by dIMP, dGMP and XMP. Could also catalyze the transfer of phosphates from pyrimidine monophosphates but with lower efficiency. Through these activities regulates the purine nucleoside/nucleotide pools within the cell. In Rattus norvegicus (Rat), this protein is Cytosolic purine 5'-nucleotidase.